Reading from the N-terminus, the 2624-residue chain is Highly reducing polyketide synthase ALT1 (2624 aa).

In terms of domain architecture, Ketosynthase family 3 (KS3) spans 28 to 449; it reads VLPLAIVGMG…GSNAHCILES (422 aa). Residue Cys200 is the For beta-ketoacyl synthase activity of the active site. The segment at 289–308 is disordered; it reads VRGTSSNSDGKTPGMSMPSS. Active-site for beta-ketoacyl synthase activity residues include His335 and His372. The span at 523-544 shows a compositional bias: polar residues; sequence ESYSNHHTLTETTNPSNNTATN. The segment at 523–545 is disordered; it reads ESYSNHHTLTETTNPSNNTATNG. The tract at residues 639–945 is malonyl-CoA:ACP transacylase (MAT) domain; sequence VFTGQGAQWA…GYTPAMIRGK (307 aa). Residues 1009 to 1140 are N-terminal hotdog fold; sequence HELLGSQTLE…GQVRPGRDAH (132 aa). Positions 1009–1301 are dehydratase (DH) domain; that stretch reads HELLGSQTLE…LEGGKFSPIE (293 aa). In terms of domain architecture, PKS/mFAS DH spans 1009–1306; it reads HELLGSQTLE…FSPIEVDDGI (298 aa). His1041 acts as the Proton acceptor; for dehydratase activity in catalysis. The C-terminal hotdog fold stretch occupies residues 1157–1306; that stretch reads QYPRPVDSLY…FSPIEVDDGI (150 aa). Asp1217 acts as the Proton donor; for dehydratase activity in catalysis. The methyltransferase (CMet) domain stretch occupies residues 1493 to 1599; that stretch reads LEIGAGTGGA…RKLLAPEGYL (107 aa). The interval 1895-2205 is enoyl reductase (ER) (ER) domain; it reads GLLQTLKWVD…KGTHLGKIVV (311 aa). A ketoreductase (KR) domain region spans residues 2230 to 2509; that stretch reads TYVLVGGLGG…DSDALRFFIT (280 aa). Residues 2522–2600 form the Carrier domain; the sequence is ASLDLVTRTI…GLAKLILDAL (79 aa). Ser2559 is subject to O-(pantetheine 4'-phosphoryl)serine.

Its pathway is mycotoxin biosynthesis. In terms of biological role, highly reducing polyketide synthase; part of the gene cluster that mediates the biosynthesis of the host-selective toxins (HSTs) AAL-toxins, sphinganine-analog mycotoxins responsible for Alternaria stem canker on tomato by the tomato pathotype. The biosynthesis starts with the polyketide synthase ALT1-catalyzed C-16 carbon chain assembly from one starter acetyl-CoA unit with malonyl-CoA extender units. ALT1 also selectively transfers methyl groups at the first and the third cycle of chain elongation for AAL toxin. The C-16 polyketide chain is released from the enzyme by a nucleophilic attack of a carbanion, which is derived from R-carbon of glycin by decarboxylation, on the carbonyl carbon of polyketide acyl chain. This step is probably catalyzed by a pyridoxal 5'-phosphate-dependent aminoacyl transferase ALT4. The respective functions of the other enzymes encoded by the cluster have still to be elucidated. The sphingosine N-acyltransferase-like protein ALT7 seems not to act as a resistance/self-tolerance factor against the toxin in the toxin biosynthetic gene cluster, contrary to what is expected. The protein is Highly reducing polyketide synthase ALT1 of Alternaria alternata (Alternaria rot fungus).